The sequence spans 1956 residues: Histone-lysine N-methyltransferase SETD1B (1956 aa).

Positions 1–20 (MSFKEAKPGERGKNPEDHGR) are enriched in basic and acidic residues. Positions 1-46 (MSFKEAKPGERGKNPEDHGRKQTASWINGMEAGNQPSTSGEKKSHH) are disordered. Residues 111–199 (DEFYVGPVPP…NIIHVELDTK (89 aa)) form the RRM domain. 9 disordered regions span residues 226–478 (LDAS…LEAE), 502–637 (IAGD…VTPS), 662–696 (GFPP…VTVP), 926–1148 (KEPP…DEMQ), 1341–1386 (EDLP…TLTS), 1420–1464 (PTFP…VPSP), 1512–1553 (HLTS…NYET), 1627–1655 (TKHK…FSPP), and 1766–1790 (IDTQ…RRSE). Composition is skewed to polar residues over residues 254 to 290 (VTPN…QGTP), 298 to 312 (PFSQ…QTTP), and 346 to 361 (SSGS…NVTR). The span at 363–373 (QPEPVQVPRTP) shows a compositional bias: pro residues. 3 stretches are compositionally biased toward polar residues: residues 375 to 407 (LSHS…PQTS), 416 to 432 (GPQT…NSAS), and 451 to 464 (DSTT…SQTP). A compositionally biased stretch (low complexity) spans 517-527 (SPISSSSSQLS). Polar residues-rich tracts occupy residues 535 to 551 (GSRY…SSTG) and 575 to 593 (SLCQ…NQSG). A compositionally biased stretch (basic and acidic residues) spans 594–605 (RKTESLDKKELV). Positions 625-634 (EDMEISDDEV) are enriched in acidic residues. The span at 986 to 1000 (SEGEEEVESEGDDGE) shows a compositional bias: acidic residues. The span at 1001-1011 (TSDKEDSSSEK) shows a compositional bias: basic and acidic residues. The span at 1068-1122 (DSSDESEESSEYESSSDSDEKEEEDDEEEELVFGDDQSEDQDLGQEYEVETDREE) shows a compositional bias: acidic residues. Residues 1341–1352 (EDLPRTPGRDIV) show a composition bias toward basic and acidic residues. Composition is skewed to polar residues over residues 1358 to 1367 (LGKSQSTETV) and 1450 to 1462 (EPTS…NSVP). Over residues 1541-1551 (SAHEFETEKNY) the composition is skewed to basic and acidic residues. The segment covering 1628–1638 (KHKKSRNSRHN) has biased composition (basic residues). Residues 1769 to 1783 (QGKSIPAQPQASTRA) show a composition bias toward polar residues. The short motif at 1788-1793 (RSEQRR) is the RxxxRR motif element. Residues 1817–1934 (KKLRFCKSHI…VNEEITYDYK (118 aa)) form the SET domain. Tyrosine 1933 serves as a coordination point for S-adenosyl-L-methionine. Residues 1940–1956 (VKIPCLCGAENCRGTLN) form the Post-SET domain.

This sequence belongs to the class V-like SAM-binding methyltransferase superfamily. In terms of assembly, component of the SET1B/COMPASS complex.

Its subcellular location is the nucleus speckle. It localises to the chromosome. The catalysed reaction is L-lysyl(4)-[histone H3] + 3 S-adenosyl-L-methionine = N(6),N(6),N(6)-trimethyl-L-lysyl(4)-[histone H3] + 3 S-adenosyl-L-homocysteine + 3 H(+). Its function is as follows. Histone methyltransferase that specifically methylates 'Lys-4' of histone H3, when part of the SET1 histone methyltransferase (HMT) complex, but not if the neighboring 'Lys-9' residue is already methylated. H3 'Lys-4' methylation represents a specific tag for epigenetic transcriptional activation. The sequence is that of Histone-lysine N-methyltransferase SETD1B (setd1b) from Xenopus tropicalis (Western clawed frog).